Here is a 274-residue protein sequence, read N- to C-terminus: MSEVEIENAATIEGNTAADAPVTDAAVEKKPAAKGRKTKNVKEVKEKKTVAAAPKKRTVSSHPTYEEMIKDAIVTLKERTGSSQYAIQKFIEEKRKELPPTFRKLLLLNLKRLVASGKLVKVKASFKLPSASAKASSPKAAAEKSAPAKKKPATVAVTKAKRKVAAASKAKKTIAVKPKTAAAKKVTAKAKAKPVPRATAAATKRKAVDAKPKAKARPAKAAKTAKVTSPAKKAVAATKKVATVATKKKTPVKKVVKPKTVKSPAKRASSRVKK.

2 disordered regions span residues 1–63 (MSEV…SSHP) and 129–155 (PSAS…PATV). An N-acetylserine modification is found at Ser-2. Over residues 16–25 (TAADAPVTDA) the composition is skewed to low complexity. Over residues 40–49 (NVKEVKEKKT) the composition is skewed to basic and acidic residues. Residues 61–130 (SHPTYEEMIK…KVKASFKLPS (70 aa)) enclose the H15 domain. Residues 129–145 (PSASAKASSPKAAAEKS) show a composition bias toward low complexity. Residue Lys-161 forms a Glycyl lysine isopeptide (Lys-Gly) (interchain with G-Cter in ubiquitin) linkage. Disordered stretches follow at residues 167 to 233 (ASKA…PAKK) and 249 to 274 (KTPV…RVKK). Composition is skewed to low complexity over residues 175 to 185 (AVKPKTAAAKK) and 221 to 233 (AAKT…PAKK).

The protein belongs to the histone H1/H5 family.

It is found in the nucleus. It localises to the chromosome. Functionally, histones H1 are necessary for the condensation of nucleosome chains into higher-order structures. The chain is Histone H1.1 from Arabidopsis thaliana (Mouse-ear cress).